Consider the following 527-residue polypeptide: MLLVRASRAVRCCCSYSLHKTVTFQARHSLYSAHKVHSNGHFHLPLSGIRCFFSGSPYWKAKKHGGEHSKAGNLTAIDDYWLEEVEEELEDLDLSPHTASLLQGAHRVFIVHPDVKWGAKKDQLSTADLQVAEAAALVHSLPNWSVVNTLIMSTKSPDSKLIFGKGNFQTLTDVIKGHPQITAVFLNVERLSSLTEKEMEEAWGVKVFDRYTVVLNIFRFNAHTKEAKLQIALAELPLLRSSLKNETAHMDQQGGGSRYIMGSGETFLEVQQRLLKEREIKIKYALEKVKKKRNLLRTQRRRREFPIISILGYTNSGKTTLIKALTGDEGLQPRDQLFATLDVTSHAGLLPCHMPVIYVDTIGFLSQLPHNLIESFSATLEDVVHSDLLIHVRDISHPETTKQKASVLSVLKNLGLPQQLLDTMIEVQNKIDLIDMPENTEDSVLSVSALHGHGLEDLKQQVETAVMKSTGRNVVTIKVNLESPQLSWLYKEASVQEVKVLPEDGTARVRVIITNSAYGKYRKLFCK.

Positions 306 to 470 (PIISILGYTN…QVETAVMKST (165 aa)) constitute a Hflx-type G domain. Residues 312 to 319 (GYTNSGKT), 338 to 342 (FATLD), 360 to 363 (DTIG), 429 to 432 (NKID), and 448 to 450 (SAL) contribute to the GTP site. Residues Thr319 and Thr340 each contribute to the Mg(2+) site.

It belongs to the TRAFAC class OBG-HflX-like GTPase superfamily. HflX GTPase family. Requires Mg(2+) as cofactor.

This chain is Putative GTP-binding protein 6 (gtpbp6), found in Xenopus laevis (African clawed frog).